We begin with the raw amino-acid sequence, 160 residues long: 6,7-dimethyl-8-ribityllumazine synthase (160 aa).

5-amino-6-(D-ribitylamino)uracil-binding positions include Phe-22, 57 to 59 (TYE), and 81 to 83 (TII). 86–87 (QT) contributes to the (2S)-2-hydroxy-3-oxobutyl phosphate binding site. The active-site Proton donor is His-89. Leu-114 lines the 5-amino-6-(D-ribitylamino)uracil pocket. Arg-128 serves as a coordination point for (2S)-2-hydroxy-3-oxobutyl phosphate.

The protein belongs to the DMRL synthase family. Forms an icosahedral capsid composed of 60 subunits, arranged as a dodecamer of pentamers.

The enzyme catalyses (2S)-2-hydroxy-3-oxobutyl phosphate + 5-amino-6-(D-ribitylamino)uracil = 6,7-dimethyl-8-(1-D-ribityl)lumazine + phosphate + 2 H2O + H(+). The protein operates within cofactor biosynthesis; riboflavin biosynthesis; riboflavin from 2-hydroxy-3-oxobutyl phosphate and 5-amino-6-(D-ribitylamino)uracil: step 1/2. Catalyzes the formation of 6,7-dimethyl-8-ribityllumazine by condensation of 5-amino-6-(D-ribitylamino)uracil with 3,4-dihydroxy-2-butanone 4-phosphate. This is the penultimate step in the biosynthesis of riboflavin. The chain is 6,7-dimethyl-8-ribityllumazine synthase from Buchnera aphidicola subsp. Acyrthosiphon pisum (strain Tuc7).